The chain runs to 429 residues: MFLRPSTLLLTLFLALVAGSAIRKDVDEFDSNKGKDGIVDGDIMLTEAQLRILNGTAKRSKRQITKIWKKWPDAKVFYYYENEFTSLKRELMSYAMAHISSNTCVKFQESNSATNRIRFTNTGGCASYIGMNGGEQTLWFGDGCLIFGTAVHEIMHSLGLFHTHSRFDRDNFLSVSYKDVPENMVGNLEKETEQTTYNAVPFEYGSTMLYRYNTFGEGTLVSKNEDYQKTMGLRRVSFYDLVNINVRYSCGCAKSLTCENGGYTNPSNCATCVCPTGFAGTLCNEAPSNTIKLTAESYWKGYWVNFGYSTSIQTTNYYLAYLWITAPADKTIEVKIMDLSGFTCSYGCNYNGVEVKYMGDPRITNPLRCCAQDTEYLNQVISSKQNPTPIVMQQRYGSSKLTIHYRYVDTPLSSNKKSTNGYDNYQYYV.

The N-terminal stretch at 1–21 (MFLRPSTLLLTLFLALVAGSA) is a signal peptide. A glycan (N-linked (GlcNAc...) asparagine) is linked at Asn54. Residues 62–251 (RQITKIWKKW…VNINVRYSCG (190 aa)) form the Peptidase M12A domain. Cystine bridges form between Cys104-Cys250, Cys125-Cys144, Cys252-Cys272, and Cys274-Cys283. Residue His152 coordinates Zn(2+). Glu153 is an active-site residue. Residues His156 and His162 each coordinate Zn(2+). The EGF-like domain maps to 245 to 284 (NVRYSCGCAKSLTCENGGYTNPSNCATCVCPTGFAGTLCN).

Zn(2+) serves as cofactor.

It is found in the secreted. In terms of biological role, metalloprotease. This chain is Zinc metalloproteinase nas-17 (nas-17), found in Caenorhabditis elegans.